We begin with the raw amino-acid sequence, 625 residues long: DNA-directed RNA polymerase subunit gamma (625 aa).

Cysteine 71, cysteine 73, cysteine 86, and cysteine 89 together coordinate Zn(2+). Aspartate 467, aspartate 469, and aspartate 471 together coordinate Mg(2+).

The protein belongs to the RNA polymerase beta' chain family. RpoC1 subfamily. As to quaternary structure, in cyanobacteria the RNAP catalytic core is composed of 2 alpha, 1 beta, 1 beta', 1 gamma and 1 omega subunit. When a sigma factor is associated with the core the holoenzyme is formed, which can initiate transcription. The cofactor is Mg(2+). It depends on Zn(2+) as a cofactor.

The enzyme catalyses RNA(n) + a ribonucleoside 5'-triphosphate = RNA(n+1) + diphosphate. DNA-dependent RNA polymerase catalyzes the transcription of DNA into RNA using the four ribonucleoside triphosphates as substrates. The chain is DNA-directed RNA polymerase subunit gamma from Gloeothece citriformis (strain PCC 7424) (Cyanothece sp. (strain PCC 7424)).